The chain runs to 723 residues: Homeobox protein vnd (723 aa).

Disordered stretches follow at residues 1–115 (MTTS…GLAP), 224–307 (AHHG…HHHP), 465–549 (GSSG…RKRR), and 703–723 (HAHAHGHGHPHAHAQRAAWWP). The span at 10-22 (TPSKRDRDRERDN) shows a compositional bias: basic and acidic residues. Positions 23–36 (SSGLGSAGSLPASP) are enriched in low complexity. The segment covering 37–48 (QSAITVSPSSPA) has biased composition (polar residues). A compositionally biased stretch (basic and acidic residues) spans 61–92 (LERKREREDREDREDRKERQERHERDRDHERF). The segment covering 97-111 (STASTTVPTNTSSSS) has biased composition (low complexity). Residues 226 to 235 (HGSDLSHHSA) show a composition bias toward basic and acidic residues. The span at 237–255 (ESTSGHRGQGSHTSPSALS) shows a compositional bias: polar residues. Residues 278-289 (EADHHSTTEHHA) are compositionally biased toward basic and acidic residues. Residues 298–307 (HPHHQQHHHP) show a composition bias toward basic residues. The span at 483–493 (NNNNNTTNNNN) shows a compositional bias: low complexity. Positions 512-528 (LNEDGIEEDIDDVDDAD) are enriched in acidic residues. A DNA-binding region (homeobox) is located at residues 545–604 (KRKRRVLFTKAQTYELERRFRQQRYLSAPEREHLASLIRLTPTQVKIWFQNHRYKTKRAQ). Over residues 703-716 (HAHAHGHGHPHAHA) the composition is skewed to basic residues.

It belongs to the NK-2 homeobox family. Expressed in the CNS and midgut.

Its subcellular location is the nucleus. Its function is as follows. Probable transcriptional regulator involved in the regulation of the proneural AS-C genes and the neurogenic genes of the enhancer of split complex. Could specifically activate proneural genes in the ventral-most neuroectoderm. The polypeptide is Homeobox protein vnd (vnd) (Drosophila melanogaster (Fruit fly)).